The primary structure comprises 535 residues: MSIIDHHSVVPRSEAAVGEDGRARTYEVRTFGCQMNVHDSERLSGSLEAAGYVPANGEEADIVVINTCAVRENADNKLYGNLGHLASVKRRHAGMQIAVGGCLAQKDKNVILEKAPWVDVVFGTHNMGALPRLLERARHNDAAEIEILEALETFPSTLPTKRDSSFSGWVSISVGCNNTCTFCIVPALRGKEKDRRPGDILAEVQALVDEGAVEVTLLGQNVNSYGVEFGDRQAFSKLLRAAGQIEGLERIRFTSPHPAAFTEDVIDAMAETPNVMPQLHMPLQSGSDRILRSMRRSYRSEKFLGILDRVRAKLPGAAISTDIIVGFPGETEEDFLDTLRVVEAARFASAFTFQYSIRPGTPAATMAGQVPKEVVQERYDRLIALQERISLEENEKLIGRDVELLVATGEGRKDADTRRLSGRARDSRLVHFELPAGSEVPRPGDVALVRVTQAAPHYLIADAAGGPLRVRRTRAGDAWDRAEAESCAAPSLSGGRAAAAVGRVSLGLPTLRTREPLTSPGVGTMPLYDPTDGQR.

The region spanning 24 to 139 (RTYEVRTFGC…LPRLLERARH (116 aa)) is the MTTase N-terminal domain. Cysteine 33, cysteine 68, cysteine 102, cysteine 176, cysteine 180, and cysteine 183 together coordinate [4Fe-4S] cluster. In terms of domain architecture, Radical SAM core spans 162-392 (RDSSFSGWVS…IALQERISLE (231 aa)). The TRAM domain occupies 395–465 (EKLIGRDVEL…PHYLIADAAG (71 aa)). The segment at 512-535 (RTREPLTSPGVGTMPLYDPTDGQR) is disordered.

It belongs to the methylthiotransferase family. MiaB subfamily. In terms of assembly, monomer. The cofactor is [4Fe-4S] cluster.

The protein resides in the cytoplasm. It carries out the reaction N(6)-dimethylallyladenosine(37) in tRNA + (sulfur carrier)-SH + AH2 + 2 S-adenosyl-L-methionine = 2-methylsulfanyl-N(6)-dimethylallyladenosine(37) in tRNA + (sulfur carrier)-H + 5'-deoxyadenosine + L-methionine + A + S-adenosyl-L-homocysteine + 2 H(+). In terms of biological role, catalyzes the methylthiolation of N6-(dimethylallyl)adenosine (i(6)A), leading to the formation of 2-methylthio-N6-(dimethylallyl)adenosine (ms(2)i(6)A) at position 37 in tRNAs that read codons beginning with uridine. This Leifsonia xyli subsp. xyli (strain CTCB07) protein is tRNA-2-methylthio-N(6)-dimethylallyladenosine synthase.